A 231-amino-acid polypeptide reads, in one-letter code: 7-cyano-7-deazaguanine synthase (231 aa).

8–18 (FSGGQDSTTCL) serves as a coordination point for ATP. Residues Cys188, Cys197, Cys200, and Cys203 each contribute to the Zn(2+) site.

The protein belongs to the QueC family. The cofactor is Zn(2+).

It carries out the reaction 7-carboxy-7-deazaguanine + NH4(+) + ATP = 7-cyano-7-deazaguanine + ADP + phosphate + H2O + H(+). The protein operates within purine metabolism; 7-cyano-7-deazaguanine biosynthesis. Catalyzes the ATP-dependent conversion of 7-carboxy-7-deazaguanine (CDG) to 7-cyano-7-deazaguanine (preQ(0)). This Shigella dysenteriae serotype 1 (strain Sd197) protein is 7-cyano-7-deazaguanine synthase.